We begin with the raw amino-acid sequence, 416 residues long: MGSAGVASSSSDVAISALREKHEKEVENLTLTTQPLNTLKLFVEATIQYIKRSISYLLAHGGWFILITTLLVVSGGLLVTVDGPHGKHVEEVLEYVRYGLWWIALGVASSIGLGSGLHTFVLYLGPHIALFTLKATLCGRVDLKSAPYDTIQLKRVPSWLDKSCSEFGPPLMISAAGSRVPLTSILPQVQLEAILWGIGTALGELPPYFISRAASISGSTVDGMEELDGSSTEDSGFMATHLNRVKRWLLTHSQHLNFFTVLVLASVPNPLFDLAGIMCGQFGIPFWEFFLATLIGKAIIKTHIQTIFIICVCNNQLLDWMENELIWILSHVPGLASMLPGLTAKLHAMKEKYIDAPSPVPSHIKVKKWDFSFASIWNGIVWLMLLNFFVKIVTATAQRHLKKKQEKEMATLTHSD.

Glycine 2 is modified (N-acetylglycine). The Cytoplasmic portion of the chain corresponds to 2–60 (GSAGVASSSSDVAISALREKHEKEVENLTLTTQPLNTLKLFVEATIQYIKRSISYLLAH). The helical transmembrane segment at 61-81 (GGWFILITTLLVVSGGLLVTV) threads the bilayer. Residues 82 to 101 (DGPHGKHVEEVLEYVRYGLW) lie on the Lumenal side of the membrane. Residues 102–124 (WIALGVASSIGLGSGLHTFVLYL) traverse the membrane as a helical segment. Over 125–257 (GPHIALFTLK…WLLTHSQHLN (133 aa)) the chain is Cytoplasmic. The chain crosses the membrane as a helical span at residues 258 to 278 (FFTVLVLASVPNPLFDLAGIM). Over 279-289 (CGQFGIPFWEF) the chain is Lumenal. Residues 290 to 312 (FLATLIGKAIIKTHIQTIFIICV) traverse the membrane as a helical segment. Residues 313-323 (CNNQLLDWMEN) are Cytoplasmic-facing. A helical transmembrane segment spans residues 324–344 (ELIWILSHVPGLASMLPGLTA). Residues 345 to 372 (KLHAMKEKYIDAPSPVPSHIKVKKWDFS) lie on the Lumenal side of the membrane. The helical transmembrane segment at 373-393 (FASIWNGIVWLMLLNFFVKIV) threads the bilayer. Residues 394 to 416 (TATAQRHLKKKQEKEMATLTHSD) lie on the Cytoplasmic side of the membrane.

It belongs to the VMP1 family.

The protein localises to the endoplasmic reticulum membrane. Functionally, involved in the early secretory pathway. Required for the correct export of secretory products from the endoplasmic reticulum (ER) and involved in the maintenance of ER integrity. This chain is Vacuole membrane protein KMS1, found in Arabidopsis thaliana (Mouse-ear cress).